A 145-amino-acid polypeptide reads, in one-letter code: 3-hydroxyacyl-[acyl-carrier-protein] dehydratase FabZ (145 aa).

His-47 is a catalytic residue.

This sequence belongs to the thioester dehydratase family. FabZ subfamily.

The protein resides in the cytoplasm. It carries out the reaction a (3R)-hydroxyacyl-[ACP] = a (2E)-enoyl-[ACP] + H2O. In terms of biological role, involved in unsaturated fatty acids biosynthesis. Catalyzes the dehydration of short chain beta-hydroxyacyl-ACPs and long chain saturated and unsaturated beta-hydroxyacyl-ACPs. This chain is 3-hydroxyacyl-[acyl-carrier-protein] dehydratase FabZ, found in Geotalea uraniireducens (strain Rf4) (Geobacter uraniireducens).